The chain runs to 597 residues: MKHIRNFSIIAHIDHGKSTLSDRLIQVCGGLSDREMAAQVLDSMDLERERGITIKAQSVTLDYTAKDGETYQLNFIDTPGHVDFSYEVSRSLAACEGALLVVDAGQGVEAQTLANCYTAIEMDLEVVPILNKIDLPAADPDRVAEEIEEIVGIDATDATRCSAKTGLGVDEVLETIVKSIPAPEGDPEAPTQALIIDSWFDNYLGVVSLVRIKNGSLKKNDKIKVMSTGQVWGIDRIGIFTPKQIDTDVLNTGEVGWVVCGIKDILGAPVGDTLTHAKGGCEERLPGFQKVKPQVYAGLFPVSSDDYENFRDALGKLSLNDASLFYEPESSAALGFGFRCGFLGMLHMEIIQERLEREYDLDLITTAPTVVYEVAKTDGEILYVDSPAKLPAVNDIDEIREPIARCNILVPSDYLGNVITLCVEKRGVQVDMQYHGNQVAVTYDVPMAEVVLDFFDRLKSTSRGYASLDYNFQRYEASSMVRVDVLLNGDKVDALAIITHKDNSQSRGRLLVEKMKEFIPRQMFDIAIQAAIGNHIIARSTVKQLRKNVIAKCYGGDVSRKKKLLKKQKEGKKRMKQIGNVELPQEAFLAILHVGKD.

The 183-residue stretch at 2–184 (KHIRNFSIIA…TIVKSIPAPE (183 aa)) folds into the tr-type G domain. GTP is bound by residues 14-19 (DHGKST) and 131-134 (NKID).

This sequence belongs to the TRAFAC class translation factor GTPase superfamily. Classic translation factor GTPase family. LepA subfamily.

It is found in the cell inner membrane. It catalyses the reaction GTP + H2O = GDP + phosphate + H(+). Functionally, required for accurate and efficient protein synthesis under certain stress conditions. May act as a fidelity factor of the translation reaction, by catalyzing a one-codon backward translocation of tRNAs on improperly translocated ribosomes. Back-translocation proceeds from a post-translocation (POST) complex to a pre-translocation (PRE) complex, thus giving elongation factor G a second chance to translocate the tRNAs correctly. Binds to ribosomes in a GTP-dependent manner. This is Elongation factor 4 from Aliivibrio fischeri (strain ATCC 700601 / ES114) (Vibrio fischeri).